The following is a 316-amino-acid chain: Biotin synthase (316 aa).

Residues 36–260 form the Radical SAM core domain; that stretch reads NKIQISMLLN…LMPKSYIRLA (225 aa). Residues Cys-51, Cys-55, and Cys-58 each coordinate [4Fe-4S] cluster. Cys-95, Cys-126, Cys-186, and Arg-258 together coordinate [2Fe-2S] cluster.

Belongs to the radical SAM superfamily. Biotin synthase family. As to quaternary structure, homodimer. The cofactor is [4Fe-4S] cluster. Requires [2Fe-2S] cluster as cofactor.

The enzyme catalyses (4R,5S)-dethiobiotin + (sulfur carrier)-SH + 2 reduced [2Fe-2S]-[ferredoxin] + 2 S-adenosyl-L-methionine = (sulfur carrier)-H + biotin + 2 5'-deoxyadenosine + 2 L-methionine + 2 oxidized [2Fe-2S]-[ferredoxin]. Its pathway is cofactor biosynthesis; biotin biosynthesis; biotin from 7,8-diaminononanoate: step 2/2. In terms of biological role, catalyzes the conversion of dethiobiotin (DTB) to biotin by the insertion of a sulfur atom into dethiobiotin via a radical-based mechanism. The protein is Biotin synthase of Lawsonia intracellularis (strain PHE/MN1-00).